The following is a 1003-amino-acid chain: NACHT, LRR and PYD domains-containing protein 9B (1003 aa).

Residues 1–91 form the Pyrin domain; it reads MAGSSGYGLL…SIMAQKKKRH (91 aa). The 323-residue stretch at 143–465 folds into the NACHT domain; it reads VTAIVAGTTG…QDKDICVPVI (323 aa). 149–156 is a binding site for ATP; it reads GTTGEGKT. 7 LRR repeats span residues 749-770, 778-799, 806-826, 835-856, 863-883, 892-913, and 920-940; these read KVKH…SLCE, VLQS…HLYE, HLSL…NLLC, TLKE…EISA, NLKT…RQLC, NLEC…DLAL, and TLNS…VVLC.

As to quaternary structure, sensor component of NLRP9 inflammasomes. Inflammasomes are supramolecular complexes that assemble in the cytosol in response to pathogens, such as rotavirus, but not encephalomyocarditis virus (EMCV), and play critical roles in innate immunity and inflammation. The core of NLRP9 inflammasomes consists of a signal sensor component (NLRP9), an adapter (ASC/PYCARD), which recruits an effector pro-inflammatory caspase (CASP1). Within the complex, NLRP9 and PYCARD interact via their respective DAPIN/pyrin domains. This interaction initiates speck formation (nucleation) which greatly enhances further addition of soluble PYCARD molecules to the speck in a prion-like polymerization process. Clustered PYCARD nucleates the formation of CASP1 filaments through the interaction of their respective CARD domains, acting as a platform for CASP1 polymerization. CASP1 filament formation increases local enzyme concentration, resulting in trans-autocleavage and activation. Active CASP1 then processes IL1B and IL18 precursors, leading to the release of mature cytokines in the extracellular milieu and inflammatory response. Interacts with DHX9 upon rotavirus infection; this interaction may trigger inflammasome activation and inflammatory response. Predominantly expressed in the intestine, including proximal and distal colon, cecum, ileum, jejunum and duodenum (at protein level). In the ileum, expressed in epithelial cells. Also expressed in oocytes at all follicular stages and in preimplantation embryos (at protein level). Although expression decreases in preimplantation embryos, it is still detectable in blastocyts.

It is found in the cytoplasm. The protein localises to the inflammasome. Functionally, as the sensor component of the NLRP9 inflammasome, plays a crucial role in innate immunity and inflammation. In response to pathogens, including rotavirus, initiates the formation of the inflammasome polymeric complex, made of NLRP9, PYCARD and CASP1. Recruitment of proCASP1 to the inflammasome promotes its activation and CASP1-catalyzed IL1B and IL18 maturation and release in the extracellular milieu. The active cytokines stimulate inflammatory responses. Inflammasomes can also induce pyroptosis, an inflammatory form of programmed cell death. NLRP9 inflammasome activation may be initiated by DHX9 interaction with viral double-stranded RNA (dsRNA), preferentially to short dsRNA segments. The chain is NACHT, LRR and PYD domains-containing protein 9B (Nlrp9b) from Mus musculus (Mouse).